The primary structure comprises 259 residues: Small ribosomal subunit protein mS23 (259 aa).

The protein belongs to the mitochondrion-specific ribosomal protein mS23 family. As to quaternary structure, component of the mitochondrial small ribosomal subunit.

It is found in the mitochondrion. This chain is Small ribosomal subunit protein mS23 (RSM25), found in Pyricularia oryzae (strain 70-15 / ATCC MYA-4617 / FGSC 8958) (Rice blast fungus).